A 285-amino-acid polypeptide reads, in one-letter code: 4-diphosphocytidyl-2-C-methyl-D-erythritol kinase (285 aa).

Lysine 11 is an active-site residue. 93 to 103 (PLAAGLAGGSA) serves as a coordination point for ATP. Residue aspartate 135 is part of the active site.

The protein belongs to the GHMP kinase family. IspE subfamily.

It catalyses the reaction 4-CDP-2-C-methyl-D-erythritol + ATP = 4-CDP-2-C-methyl-D-erythritol 2-phosphate + ADP + H(+). The protein operates within isoprenoid biosynthesis; isopentenyl diphosphate biosynthesis via DXP pathway; isopentenyl diphosphate from 1-deoxy-D-xylulose 5-phosphate: step 3/6. Catalyzes the phosphorylation of the position 2 hydroxy group of 4-diphosphocytidyl-2C-methyl-D-erythritol. The protein is 4-diphosphocytidyl-2-C-methyl-D-erythritol kinase of Moorella thermoacetica (strain ATCC 39073 / JCM 9320).